A 150-amino-acid polypeptide reads, in one-letter code: Protein Smg homolog (150 aa).

This sequence belongs to the Smg family.

The polypeptide is Protein Smg homolog (Methylobacillus flagellatus (strain ATCC 51484 / DSM 6875 / VKM B-1610 / KT)).